The chain runs to 468 residues: Acetyl-CoA decarbonylase/synthase complex subunit gamma 1 (468 aa).

Residues 1-61 (MKINSPLEAY…YAKKLAELDR (61 aa)) form the 4Fe-4S domain. Residues C18, C21, C26, and C43 each coordinate [4Fe-4S] cluster.

In terms of assembly, heterodimer of delta and gamma chains. The ACDS complex is made up of alpha, epsilon, beta, gamma and delta chains with a probable stoichiometry of (alpha(2)epsilon(2))(4)-beta(8)-(gamma(1)delta(1))(8). Requires corrinoid as cofactor. [4Fe-4S] cluster is required as a cofactor.

The enzyme catalyses 5,6,7,8-tetrahydrosarcinapterin + methyl-Co(III)-[corrinoid Fe-S protein] = 5-methyltetrahydrosarcinapterin + Co(I)-[corrinoid Fe-S protein] + H(+). It participates in one-carbon metabolism; methanogenesis from acetate. Part of a complex that catalyzes the reversible cleavage of acetyl-CoA, allowing growth on acetate as sole source of carbon and energy. The chain is Acetyl-CoA decarbonylase/synthase complex subunit gamma 1 from Methanosarcina thermophila.